The primary structure comprises 163 residues: MRIALYPGTFDPITLGHQEIIERGSFLCDRLYIGVAVGHHKKTLFSLSERCELVNGVLADLTLHCPVEVVPYCGLLATLYQKLHANILIRGLRSAGDFEYERQLFYANQHLNAQIETVFLLPAPQYSFISSTLVRELAQLNGALDGLVHDIVKKKLRLNSGGQ.

T9 is a substrate binding site. ATP contacts are provided by residues 9 to 10 (TF) and H17. Substrate-binding residues include K41, L76, and R90. ATP contacts are provided by residues 91–93 (GLR), E101, and 126–132 (YSFISST).

This sequence belongs to the bacterial CoaD family. Homohexamer. It depends on Mg(2+) as a cofactor.

The protein resides in the cytoplasm. The enzyme catalyses (R)-4'-phosphopantetheine + ATP + H(+) = 3'-dephospho-CoA + diphosphate. The protein operates within cofactor biosynthesis; coenzyme A biosynthesis; CoA from (R)-pantothenate: step 4/5. Its function is as follows. Reversibly transfers an adenylyl group from ATP to 4'-phosphopantetheine, yielding dephospho-CoA (dPCoA) and pyrophosphate. The sequence is that of Phosphopantetheine adenylyltransferase from Dichelobacter nodosus (strain VCS1703A).